A 429-amino-acid polypeptide reads, in one-letter code: Light-independent protochlorophyllide reductase subunit N (429 aa).

Positions 32, 57, and 118 each coordinate [4Fe-4S] cluster.

It belongs to the BchN/ChlN family. Protochlorophyllide reductase is composed of three subunits; BchL, BchN and BchB. Forms a heterotetramer of two BchB and two BchN subunits. Requires [4Fe-4S] cluster as cofactor.

The catalysed reaction is chlorophyllide a + oxidized 2[4Fe-4S]-[ferredoxin] + 2 ADP + 2 phosphate = protochlorophyllide a + reduced 2[4Fe-4S]-[ferredoxin] + 2 ATP + 2 H2O. It functions in the pathway porphyrin-containing compound metabolism; bacteriochlorophyll biosynthesis (light-independent). Functionally, component of the dark-operative protochlorophyllide reductase (DPOR) that uses Mg-ATP and reduced ferredoxin to reduce ring D of protochlorophyllide (Pchlide) to form chlorophyllide a (Chlide). This reaction is light-independent. The NB-protein (BchN-BchB) is the catalytic component of the complex. The chain is Light-independent protochlorophyllide reductase subunit N from Rhodopseudomonas palustris (strain TIE-1).